A 77-amino-acid polypeptide reads, in one-letter code: Large ribosomal subunit protein bL31 (77 aa).

It belongs to the bacterial ribosomal protein bL31 family. Type A subfamily. In terms of assembly, part of the 50S ribosomal subunit.

Binds the 23S rRNA. The chain is Large ribosomal subunit protein bL31 from Synechococcus elongatus (strain ATCC 33912 / PCC 7942 / FACHB-805) (Anacystis nidulans R2).